The chain runs to 449 residues: Methionine aminopeptidase 2 (449 aa).

The interval 1 to 91 (MAAQAAPELA…PRIPLTTLFP (91 aa)) is disordered. Over residues 34–50 (EEAENEGDSEDDRDDEQ) the composition is skewed to acidic residues. Residues 61–75 (KKKKKKRPKKKKKTA) are compositionally biased toward basic residues. His199 lines the substrate pocket. Residues Asp219, Asp230, and His299 each contribute to the a divalent metal cation site. His307 provides a ligand contact to substrate. Residues Glu335 and Glu430 each coordinate a divalent metal cation.

It belongs to the peptidase M24A family. Methionine aminopeptidase eukaryotic type 2 subfamily. Requires Co(2+) as cofactor. Zn(2+) serves as cofactor. It depends on Mn(2+) as a cofactor. Fe(2+) is required as a cofactor.

Its subcellular location is the cytoplasm. The enzyme catalyses Release of N-terminal amino acids, preferentially methionine, from peptides and arylamides.. Its function is as follows. Cotranslationally removes the N-terminal methionine from nascent proteins. The N-terminal methionine is often cleaved when the second residue in the primary sequence is small and uncharged (Met-Ala-, Cys, Gly, Pro, Ser, Thr, or Val). The sequence is that of Methionine aminopeptidase 2 from Trichophyton verrucosum (strain HKI 0517).